Here is a 170-residue protein sequence, read N- to C-terminus: Ribosome maturation factor RimM (170 aa).

In terms of domain architecture, PRC barrel spans 93-165 (PDEFHDHELI…RVVIDPPPGL (73 aa)).

It belongs to the RimM family. Binds ribosomal protein uS19.

It localises to the cytoplasm. Its function is as follows. An accessory protein needed during the final step in the assembly of 30S ribosomal subunit, possibly for assembly of the head region. Essential for efficient processing of 16S rRNA. May be needed both before and after RbfA during the maturation of 16S rRNA. It has affinity for free ribosomal 30S subunits but not for 70S ribosomes. This chain is Ribosome maturation factor RimM, found in Thermobifida fusca (strain YX).